A 414-amino-acid polypeptide reads, in one-letter code: Methanesulfonate monooxygenase hydroxylase subunit alpha (414 aa).

The 120-residue stretch at 44 to 163 (WVPFRHESEL…CEVKFGGFVW (120 aa)) folds into the Rieske domain. Cysteine 86, histidine 88, cysteine 115, and histidine 118 together coordinate [2Fe-2S] cluster. Histidine 225 serves as a coordination point for Fe cation.

Belongs to the bacterial ring-hydroxylating dioxygenase alpha subunit family. The MSA monooxygenase system consists of 4 proteins: the 2 subunits of the hydroxylase component (MsmA and MsmB), a ferredoxin (MsmC) and a ferredoxin reductase (MsmD). The hydroxylase component consists of a 3 alpha (MsmA) and 3 beta (MsmB) subunits. [2Fe-2S] cluster is required as a cofactor. Requires Fe cation as cofactor.

It localises to the cytoplasm. The catalysed reaction is methanesulfonate + NADH + O2 = sulfite + formaldehyde + NAD(+) + H2O. MSAMO is inhibited by metal chelators (such as bathophenanthroline, bathocuprione, neocuprione, alpha-alpha-dipyridil and sodium EDTA) and by sodium azide, sodium arsenate and potassium cyanide. Functionally, methanesulfonate monooxygenase (MSAMO) mediates the primary degradation of methanesulfonic acid (MSA) to produce formaldehyd and inorganic sulfite by initial hydroxylation of the carbon atom prior to spontaneous cleavage of the unstable hydroxymethanesulfonic acid. MSAMO has a restricted substrate range that includes only the short-chain aliphatic sulfonates (methane- to butanesulfonate) and excludes all larger molecules, such as arylsulfonates and aromatic sulfonates. All MSAMO components are required for enzyme activity. This chain is Methanesulfonate monooxygenase hydroxylase subunit alpha, found in Methylosulfonomonas methylovora.